Consider the following 457-residue polypeptide: tRNA modification GTPase MnmE (457 aa).

Residues R25, E87, and R126 each coordinate (6S)-5-formyl-5,6,7,8-tetrahydrofolate. Residues 223–377 (GISTAIIGRP…IEERINNLFF (155 aa)) form the TrmE-type G domain. N233 provides a ligand contact to K(+). GTP contacts are provided by residues 233 to 238 (NVGKSS), 252 to 258 (TDIAGTT), and 277 to 280 (DTAG). S237 is a Mg(2+) binding site. T252, I254, and T257 together coordinate K(+). T258 contributes to the Mg(2+) binding site. (6S)-5-formyl-5,6,7,8-tetrahydrofolate is bound at residue K457.

This sequence belongs to the TRAFAC class TrmE-Era-EngA-EngB-Septin-like GTPase superfamily. TrmE GTPase family. Homodimer. Heterotetramer of two MnmE and two MnmG subunits. K(+) serves as cofactor.

It is found in the cytoplasm. Its function is as follows. Exhibits a very high intrinsic GTPase hydrolysis rate. Involved in the addition of a carboxymethylaminomethyl (cmnm) group at the wobble position (U34) of certain tRNAs, forming tRNA-cmnm(5)s(2)U34. This Streptococcus pneumoniae serotype 4 (strain ATCC BAA-334 / TIGR4) protein is tRNA modification GTPase MnmE.